Consider the following 225-residue polypeptide: Ureidoacrylate amidohydrolase RutB (225 aa).

Residue Asp-22 is the Proton acceptor of the active site. Lys-131 is an active-site residue. The active-site Nucleophile is Cys-164.

This sequence belongs to the isochorismatase family. RutB subfamily.

The enzyme catalyses (Z)-3-ureidoacrylate + H2O + H(+) = (Z)-3-aminoacrylate + NH4(+) + CO2. The catalysed reaction is (Z)-3-ureidoacrylate + H2O = (Z)-3-aminoacrylate + carbamate + H(+). It carries out the reaction (Z)-2-methylureidoacrylate + H2O + H(+) = (Z)-2-methylaminoacrylate + NH4(+) + CO2. Hydrolyzes ureidoacrylate to form aminoacrylate and carbamate. The carbamate hydrolyzes spontaneously, thereby releasing one of the nitrogen atoms of the pyrimidine ring as ammonia and one of its carbon atoms as CO2. The sequence is that of Ureidoacrylate amidohydrolase RutB from Caulobacter vibrioides (strain ATCC 19089 / CIP 103742 / CB 15) (Caulobacter crescentus).